The primary structure comprises 445 residues: Phosphoglucosamine mutase (445 aa).

S102 acts as the Phosphoserine intermediate in catalysis. Residues S102, D241, D243, and D245 each coordinate Mg(2+). S102 carries the phosphoserine modification.

Belongs to the phosphohexose mutase family. Requires Mg(2+) as cofactor. Activated by phosphorylation.

The catalysed reaction is alpha-D-glucosamine 1-phosphate = D-glucosamine 6-phosphate. Functionally, catalyzes the conversion of glucosamine-6-phosphate to glucosamine-1-phosphate. The polypeptide is Phosphoglucosamine mutase (Acinetobacter baumannii (strain AB0057)).